Consider the following 4841-residue polypeptide: Nonribosomal peptide synthetase 2 (4841 aa).

The interval 26–429 (VKPPNQNVAL…GRLSDGQVKL (404 aa)) is adenylation 1. Residues 531 to 604 (EPVDEFESSL…DIIFAARRQI (74 aa)) form the Carrier 1 domain. S565 bears the O-(pantetheine 4'-phosphoryl)serine mark. Positions 640–1042 (EEIIPCTPLQ…ILERPTQEIK (403 aa)) are condensation 1. Residues 1072–1463 (FEDVVRKHPE…GRIDDQVKLR (392 aa)) form an adenylation 2 region. The Carrier 2 domain occupies 1587–1665 (EGDWSRMDLV…QLAKHLEGKP (79 aa)). Position 1625 is an O-(pantetheine 4'-phosphoryl)serine (S1625). Residues 1702–2043 (ILPCTPLQEA…QTVWELEADS (342 aa)) form a condensation 2 region. Residues 2139 to 2212 (SEVELDVRQV…KIAAKLLENR (74 aa)) enclose the Carrier 3 domain. S2173 carries the O-(pantetheine 4'-phosphoryl)serine modification. Residues 2248 to 2663 (AVLPCTPLQS…NHLATEDEAF (416 aa)) are condensation 3. The interval 2695-3090 (AAVHPNKLAL…GRADDQVKLR (396 aa)) is adenylation 3. In terms of domain architecture, Carrier 4 spans 3219–3293 (QDILVLLYDA…DLANCLAKAA (75 aa)). S3253 bears the O-(pantetheine 4'-phosphoryl)serine mark. The tract at residues 3333-3735 (IAPCSPLQEG…DLAAESPQSE (403 aa)) is condensation 4. The 80-residue stretch at 3759 to 3838 (QNSFEWTSEA…KMITELASIT (80 aa)) folds into the Carrier 5 domain. S3799 carries the O-(pantetheine 4'-phosphoryl)serine modification. The condensation 5 stretch occupies residues 3873-4242 (SVLPPTHLQE…VEAEAVSDSL (370 aa)). The Carrier 6 domain occupies 4318–4394 (IEWNQNEIGI…EMAQKADTKL (77 aa)). S4355 carries the post-translational modification O-(pantetheine 4'-phosphoryl)serine. Residues 4430–4726 (EVLPALPMQV…DIHLITSESR (297 aa)) are condensation 6.

Belongs to the NRP synthetase family.

The protein operates within siderophore biosynthesis. In terms of biological role, nonribosomal peptide synthetase; part of the gene cluster that mediates the biosynthesis of hydroxamate-containing siderophores that play a critical role in virulence. Gibberella zeae produces extracellular coprogen-type siderophores as well as the intracellular siderophore ferricrocin. The role of extracellular siderophores is to supply iron to the fungus during plant infection, and the intracellular ferricrocin is required for intracellular iron distribution and storage with a crucial role in ascus and ascospore development. SID1 catalyzes the conversion of L-ornithine to N(5)-hydroxyornithine, the first step in the biosynthesis of all hydroxamate-containing siderophores. The assembly of extracellular coprogen-type siderophores is performed by the nonribosomal peptide synthetase (NRPS) NPS6 whereas the intracellular siderophore ferricrocin is assembled by NPS2. The protein is Nonribosomal peptide synthetase 2 of Gibberella zeae (strain ATCC MYA-4620 / CBS 123657 / FGSC 9075 / NRRL 31084 / PH-1) (Wheat head blight fungus).